Reading from the N-terminus, the 122-residue chain is Large ribosomal subunit protein uL14 (122 aa).

Belongs to the universal ribosomal protein uL14 family. Part of the 50S ribosomal subunit. Forms a cluster with proteins L3 and L19. In the 70S ribosome, L14 and L19 interact and together make contacts with the 16S rRNA in bridges B5 and B8.

Functionally, binds to 23S rRNA. Forms part of two intersubunit bridges in the 70S ribosome. The protein is Large ribosomal subunit protein uL14 of Shewanella sediminis (strain HAW-EB3).